The chain runs to 31 residues: Aspartate aminotransferase, cytoplasmic (31 aa).

The protein belongs to the class-I pyridoxal-phosphate-dependent aminotransferase family. In terms of assembly, homodimer. Requires pyridoxal 5'-phosphate as cofactor.

The protein resides in the cytoplasm. The catalysed reaction is L-aspartate + 2-oxoglutarate = oxaloacetate + L-glutamate. It carries out the reaction L-cysteine + 2-oxoglutarate = 2-oxo-3-sulfanylpropanoate + L-glutamate. The enzyme catalyses (2S)-2-aminobutanoate + 2-oxoglutarate = 2-oxobutanoate + L-glutamate. It catalyses the reaction 3-sulfino-L-alanine + 2-oxoglutarate = 3-sulfinopyruvate + L-glutamate. In terms of biological role, biosynthesis of L-glutamate from L-aspartate or L-cysteine. Important regulator of levels of glutamate, the major excitatory neurotransmitter of the vertebrate central nervous system. Acts as a scavenger of glutamate in brain neuroprotection. The aspartate aminotransferase activity is involved in hepatic glucose synthesis during development and in adipocyte glyceroneogenesis. Using L-cysteine as substrate, regulates levels of mercaptopyruvate, an important source of hydrogen sulfide. Mercaptopyruvate is converted into H(2)S via the action of 3-mercaptopyruvate sulfurtransferase (3MST). Hydrogen sulfide is an important synaptic modulator and neuroprotectant in the brain. The sequence is that of Aspartate aminotransferase, cytoplasmic from Oryctolagus cuniculus (Rabbit).